The sequence spans 184 residues: ATP synthase subunit b, chloroplastic (184 aa).

Residues 29-49 (INLINLILVLGILFYYGKGVL) form a helical membrane-spanning segment.

It belongs to the ATPase B chain family. In terms of assembly, F-type ATPases have 2 components, F(1) - the catalytic core - and F(0) - the membrane proton channel. F(1) has five subunits: alpha(3), beta(3), gamma(1), delta(1), epsilon(1). F(0) has four main subunits: a(1), b(1), b'(1) and c(10-14). The alpha and beta chains form an alternating ring which encloses part of the gamma chain. F(1) is attached to F(0) by a central stalk formed by the gamma and epsilon chains, while a peripheral stalk is formed by the delta, b and b' chains.

The protein localises to the plastid. It is found in the chloroplast thylakoid membrane. Functionally, f(1)F(0) ATP synthase produces ATP from ADP in the presence of a proton or sodium gradient. F-type ATPases consist of two structural domains, F(1) containing the extramembraneous catalytic core and F(0) containing the membrane proton channel, linked together by a central stalk and a peripheral stalk. During catalysis, ATP synthesis in the catalytic domain of F(1) is coupled via a rotary mechanism of the central stalk subunits to proton translocation. Its function is as follows. Component of the F(0) channel, it forms part of the peripheral stalk, linking F(1) to F(0). In Adiantum capillus-veneris (Maidenhair fern), this protein is ATP synthase subunit b, chloroplastic.